Reading from the N-terminus, the 61-residue chain is Small ribosomal subunit protein uS14 (61 aa).

Positions 24, 27, 40, and 43 each coordinate Zn(2+).

The protein belongs to the universal ribosomal protein uS14 family. Zinc-binding uS14 subfamily. As to quaternary structure, part of the 30S ribosomal subunit. Contacts proteins S3 and S10. It depends on Zn(2+) as a cofactor.

Its function is as follows. Binds 16S rRNA, required for the assembly of 30S particles and may also be responsible for determining the conformation of the 16S rRNA at the A site. In Thermotoga maritima (strain ATCC 43589 / DSM 3109 / JCM 10099 / NBRC 100826 / MSB8), this protein is Small ribosomal subunit protein uS14.